We begin with the raw amino-acid sequence, 468 residues long: Protein phosphatase ppm-1.A (468 aa).

A disordered region spans residues 1-23; that stretch reads MTISRADLQIASSAEPKTHGNLN. The 276-residue stretch at 106–381 folds into the PPM-type phosphatase domain; sequence RYGMSSMQGW…DNMTMVVVCF (276 aa). Positions 145, 146, 329, and 372 each coordinate Mn(2+).

This sequence belongs to the PP2C family. The cofactor is Mg(2+). Mn(2+) is required as a cofactor. Expressed in neurons of the nerve ring and motor neurons of the ventral nerve cord.

The protein localises to the synapse. It carries out the reaction O-phospho-L-seryl-[protein] + H2O = L-seryl-[protein] + phosphate. The enzyme catalyses O-phospho-L-threonyl-[protein] + H2O = L-threonyl-[protein] + phosphate. Probable phosphatase which regulates axon termination in ALM and PLM neurons, and synaptic branch extension and/or stabilization in PLM neurons. Plays a role in synapse formation in GABAergic DD motor neurons probably by dephosphorylating pmk-3 thereby negatively regulating a MAP kinase pathway that includes dlk-1, mkk-4 and pmk-3. The protein is Protein phosphatase ppm-1.A of Caenorhabditis elegans.